Consider the following 615-residue polypeptide: Chaperone protein HscA (615 aa).

Belongs to the heat shock protein 70 family.

Functionally, chaperone involved in the maturation of iron-sulfur cluster-containing proteins. Has a low intrinsic ATPase activity which is markedly stimulated by HscB. Involved in the maturation of IscU. In Xenorhabdus nematophila (strain ATCC 19061 / DSM 3370 / CCUG 14189 / LMG 1036 / NCIMB 9965 / AN6), this protein is Chaperone protein HscA.